The primary structure comprises 688 residues: Glycine--tRNA ligase beta subunit (688 aa).

This sequence belongs to the class-II aminoacyl-tRNA synthetase family. Tetramer of two alpha and two beta subunits.

It localises to the cytoplasm. The enzyme catalyses tRNA(Gly) + glycine + ATP = glycyl-tRNA(Gly) + AMP + diphosphate. This is Glycine--tRNA ligase beta subunit from Listeria monocytogenes serovar 1/2a (strain ATCC BAA-679 / EGD-e).